The following is a 103-amino-acid chain: N(4)-acetylcytidine amidohydrolase (103 aa).

The 96-residue stretch at 6 to 101 (ITFFQRFQDD…QTQFYVIEFK (96 aa)) folds into the ASCH domain. Lys21 (proton acceptor) is an active-site residue. Catalysis depends on Thr24, which acts as the Nucleophile. The Proton donor role is filled by Glu74.

The protein belongs to the N(4)-acetylcytidine amidohydrolase family.

The enzyme catalyses N(4)-acetylcytidine + H2O = cytidine + acetate + H(+). The catalysed reaction is N(4)-acetyl-2'-deoxycytidine + H2O = 2'-deoxycytidine + acetate + H(+). It catalyses the reaction N(4)-acetylcytosine + H2O = cytosine + acetate + H(+). In terms of biological role, catalyzes the hydrolysis of N(4)-acetylcytidine (ac4C). This chain is N(4)-acetylcytidine amidohydrolase (yqfB), found in Escherichia coli O127:H6 (strain E2348/69 / EPEC).